Consider the following 282-residue polypeptide: Probable phosphatase C1620.13 (282 aa).

Residue histidine 61 is the Tele-phosphohistidine intermediate of the active site. The Proton donor/acceptor role is filled by glutamate 135.

It belongs to the phosphoglycerate mutase family. BPG-dependent PGAM subfamily.

It is found in the nucleus. This chain is Probable phosphatase C1620.13, found in Schizosaccharomyces pombe (strain 972 / ATCC 24843) (Fission yeast).